Consider the following 148-residue polypeptide: D-aminoacyl-tRNA deacylase (148 aa).

Positions 137 to 138 match the Gly-cisPro motif, important for rejection of L-amino acids motif; sequence GP.

Belongs to the DTD family. As to quaternary structure, homodimer.

It localises to the cytoplasm. It carries out the reaction glycyl-tRNA(Ala) + H2O = tRNA(Ala) + glycine + H(+). The enzyme catalyses a D-aminoacyl-tRNA + H2O = a tRNA + a D-alpha-amino acid + H(+). Its function is as follows. An aminoacyl-tRNA editing enzyme that deacylates mischarged D-aminoacyl-tRNAs. Also deacylates mischarged glycyl-tRNA(Ala), protecting cells against glycine mischarging by AlaRS. Acts via tRNA-based rather than protein-based catalysis; rejects L-amino acids rather than detecting D-amino acids in the active site. By recycling D-aminoacyl-tRNA to D-amino acids and free tRNA molecules, this enzyme counteracts the toxicity associated with the formation of D-aminoacyl-tRNA entities in vivo and helps enforce protein L-homochirality. The polypeptide is D-aminoacyl-tRNA deacylase (Aquifex aeolicus (strain VF5)).